Consider the following 399-residue polypeptide: Phospholipase C (399 aa).

The signal sequence occupies residues 1–28 (MNKKKILKFICSAVLSFTLFSGYKSYAW). Positions 28, 38, 83, 95, 153, 157, 163, 175, and 179 each coordinate Zn(2+). The Zn-dependent PLC domain occupies 29-277 (DGKVDGTGTH…NEVSGTINTT (249 aa)). Residues 275–282 (NTTENSKI) form a linker region. A PLAT domain is found at 283 to 399 (NEIMVVIKTA…DNKTFYINNK (117 aa)). 9 residues coordinate Ca(2+): Gly298, Thr299, Asp300, Asp320, Asn321, Gly323, Asn324, Asp325, and Asp363.

Belongs to the bacterial zinc-metallophospholipase C family. It depends on Ca(2+) as a cofactor. Requires Zn(2+) as cofactor.

It is found in the secreted. It catalyses the reaction a 1,2-diacyl-sn-glycero-3-phosphocholine + H2O = phosphocholine + a 1,2-diacyl-sn-glycerol + H(+). In terms of biological role, bacterial hemolysins are exotoxins that attack blood cell membranes and cause cell rupture. Binds to eukaryotic membranes where it hydrolyzes phosphatidylcholine, sphingomyelin and phosphatidylethanolamine. The diacylglycerol produced can activate both the arachidonic acid pathway, leading to modulation of the inflammatory response cascade and thrombosis, and protein kinase C, leading to activation of eukaryotic phospholipases and further membrane damage. This chain is Phospholipase C (plc), found in Clostridium haemolyticum.